An 86-amino-acid polypeptide reads, in one-letter code: Small ribosomal subunit protein bS20 (86 aa).

Basic and acidic residues predominate over residues 1-18 (MANIKSQEKRIRTNERAR). A disordered region spans residues 1 to 25 (MANIKSQEKRIRTNERARLRNQATK).

It belongs to the bacterial ribosomal protein bS20 family.

Functionally, binds directly to 16S ribosomal RNA. In Mycobacteroides abscessus (strain ATCC 19977 / DSM 44196 / CCUG 20993 / CIP 104536 / JCM 13569 / NCTC 13031 / TMC 1543 / L948) (Mycobacterium abscessus), this protein is Small ribosomal subunit protein bS20.